The chain runs to 202 residues: Transcription factor IBH1 (202 aa).

Residues 1 to 16 are compositionally biased toward pro residues; the sequence is MDAKRTPPPPTPPNPN. The segment at 1-33 is disordered; that stretch reads MDAKRTPPPPTPPNPNPSVIGSGAAADGGGFGR. Residues 136-185 enclose the bHLH domain; sequence TSAAARAVPPPPRQQGEPPRADALRRLVPGGAGMEYSSLLEETADYLRSL.

It belongs to the bHLH protein family. In terms of assembly, interacts with ILI1.

Functionally, atypical and probable non DNA-binding bHLH transcription factor that acts as a negative regulator of cell elongation and plant development. Binds the transcription factor ILI1 and forms a heterodimer of antagonistic bHLH transcription factors that function downstream of BZR1 to mediate brassinosteroid regulation of cell elongation and lamina inclination. The polypeptide is Transcription factor IBH1 (IBH1) (Oryza sativa subsp. indica (Rice)).